Here is a 350-residue protein sequence, read N- to C-terminus: N-acetyl-gamma-glutamyl-phosphate reductase (350 aa).

Cys153 is an active-site residue.

The protein belongs to the NAGSA dehydrogenase family. Type 1 subfamily.

It localises to the cytoplasm. It catalyses the reaction N-acetyl-L-glutamate 5-semialdehyde + phosphate + NADP(+) = N-acetyl-L-glutamyl 5-phosphate + NADPH + H(+). The protein operates within amino-acid biosynthesis; L-arginine biosynthesis; N(2)-acetyl-L-ornithine from L-glutamate: step 3/4. Its function is as follows. Catalyzes the NADPH-dependent reduction of N-acetyl-5-glutamyl phosphate to yield N-acetyl-L-glutamate 5-semialdehyde. This is N-acetyl-gamma-glutamyl-phosphate reductase from Gloeobacter violaceus (strain ATCC 29082 / PCC 7421).